A 212-amino-acid chain; its full sequence is Nascent polypeptide-associated complex subunit alpha-like protein 4 (212 aa).

Over residues 25-35 (QKENDVVVEDV) the composition is skewed to basic and acidic residues. Positions 25–74 (QKENDVVVEDVKDGDEDDDDVDDDDDEIADGAGENEASKQSRSEKKSRKA) are disordered. Acidic residues predominate over residues 36–53 (KDGDEDDDDVDDDDDEIA). In terms of domain architecture, NAC-A/B spans 65–130 (SRSEKKSRKA…AKIDDMSSQL (66 aa)). A UBA domain is found at 173–210 (VEAKDIDLVMTQAGVSRPKAVKALKESNGDIVSAIMEL).

Belongs to the NAC-alpha family.

Its function is as follows. May promote appropriate targeting of ribosome-nascent polypeptide complexes. In Arabidopsis thaliana (Mouse-ear cress), this protein is Nascent polypeptide-associated complex subunit alpha-like protein 4.